The primary structure comprises 180 residues: Colicin-E5 (180 aa).

Disordered regions lie at residues 24 to 143 (AQTD…GSPG) and 155 to 180 (VTQI…KNDQ). Residues 54-76 (ESRKKKEDNKRDAEGKLNDELAK) show a composition bias toward basic and acidic residues. Positions 74–180 (LAKNKGKIPG…RIQWGNKNDQ (107 aa)) are nuclease. Positions 106–116 (NTVSNGATGTS) are enriched in polar residues. Positions 160–171 (DKTDPGWVDDSR) are enriched in basic and acidic residues.

Belongs to the colicin/pyosin nuclease family.

Its function is as follows. Colicins are polypeptide toxins produced by and active against E.coli and closely related bacteria. This colicin is an endonuclease. The polypeptide is Colicin-E5 (col) (Escherichia coli).